The sequence spans 1071 residues: Intracellular phospholipase A2 (1071 aa).

Positions 1–22 (MTTTNKDGPFRQQYLPGVHKEP) are disordered. 7 ANK repeats span residues 411-440 (ENCY…TLFC), 479-508 (DGQS…KFTR), 510-539 (DRNE…EIAN), 544-570 (LGNS…ELGL), 578-610 (AGET…NMNA), 614-651 (HGNT…KINL), and 652-681 (RGES…TRCP). The region spanning 748 to 921 (ISMDGGGIRG…ISNNPALDLM (174 aa)) is the PNPLA domain. The GXGXXG signature appears at 752 to 757 (GGGIRG). The GXSXG motif lies at 784–788 (GTSTG). The active-site Nucleophile is the Ser-786. The active-site Proton acceptor is the Asp-908. A DGA/G motif is present at residues 908–910 (DGG).

This sequence belongs to the patatin family.

The catalysed reaction is a 1,2-diacyl-sn-glycero-3-phosphocholine + H2O = a 1-acyl-sn-glycero-3-phosphocholine + a fatty acid + H(+). Functionally, phospholipase that plays a critical role during oogenesis, ovulation, and/or embryogenesis. The sequence is that of Intracellular phospholipase A2 from Caenorhabditis elegans.